The primary structure comprises 401 residues: Calcium-responsive transcription coactivator (401 aa).

The segment at 1 to 148 (MSVAFASARP…TLPTTSMSMS (148 aa)) is N-terminal auto-inhibitory domain; necessary for interaction with SMARCA4/BRG1. The SH2-binding motif lies at 50 to 53 (YQQI). 2 disordered regions span residues 72–171 (QSLL…VPMQ) and 214–401 (TRAR…NYQQ). Residues 85-106 (LGPGALSQSGSSQGLHPQGSLS) show a composition bias toward low complexity. Residues 128 to 137 (NHVSMQQTAQ) are compositionally biased toward polar residues. A compositionally biased stretch (low complexity) spans 138 to 149 (STLPTTSMSMSG). The tract at residues 149–237 (GSGHGTGPGY…GGSMMGQRPM (89 aa)) is methionine-rich intra-molecular domain. An MFD domain region spans residues 251-322 (YLGQEEYYSE…SQYSQQQAGY (72 aa)). Composition is skewed to polar residues over residues 260 to 276 (EQYSHSQGSAEPMSQQY) and 285 to 294 (AYQQSSYTEQ). The span at 295–304 (SYDRSFEDPT) shows a compositional bias: basic and acidic residues. Over residues 310–374 (GGNSQYSQQQ…QGQGQQYGSY (65 aa)) the composition is skewed to low complexity. The segment at 339–401 (NQQSYPGQQQ…EQGQYGNYQQ (63 aa)) is necessary for nuclear localization. An SH2-binding motif is present at residues 358 to 361 (SQYS). Residues 375–387 (RTSQTGPSAQQQR) show a composition bias toward polar residues. The short motif at 376 to 384 (TSQTGPSAQ) is the SH3-binding element. The segment covering 389 to 401 (YGYEQGQYGNYQQ) has biased composition (low complexity). A necessary for interaction with CREBBP and for the recruitment of CREBBP to the nuclear bodies region spans residues 392 to 401 (EQGQYGNYQQ). Positions 396 to 399 (YGNY) match the SH2-binding motif.

It belongs to the SS18 family. Homodimer. Dimerization may be necessary for its function in neuronal dendritic development. Interacts (via C-terminus) with CREBBP (via N-terminus), EP300 and SMARCA4/BRG1. Interacts with the nBAF complex. Association with CREBBP facilitates transcription while the association with SMARCA4/BRG1 suppresses CREST-mediated transcription in resting neurons. In terms of tissue distribution, brain (at protein level). Also found in the heart, liver, kidney and testis.

Its subcellular location is the nucleus. The protein localises to the chromosome. It localises to the centromere. The protein resides in the kinetochore. Transcriptional activator which is required for calcium-dependent dendritic growth and branching in cortical neurons. Recruits CREB-binding protein (CREBBP) to nuclear bodies. Component of the CREST-BRG1 complex, a multiprotein complex that regulates promoter activation by orchestrating a calcium-dependent release of a repressor complex and a recruitment of an activator complex. In resting neurons, transcription of the c-FOS promoter is inhibited by BRG1-dependent recruitment of a phospho-RB1-HDAC1 repressor complex. Upon calcium influx, RB1 is dephosphorylated by calcineurin, which leads to release of the repressor complex. At the same time, there is increased recruitment of CREBBP to the promoter by a CREST-dependent mechanism, which leads to transcriptional activation. The CREST-BRG1 complex also binds to the NR2B promoter, and activity-dependent induction of NR2B expression involves a release of HDAC1 and recruitment of CREBBP. This Rattus norvegicus (Rat) protein is Calcium-responsive transcription coactivator (Ss18l1).